The sequence spans 273 residues: Dermonecrotic toxin LafSicTox-betaIE1 (273 aa).

The active site involves H5. Positions 25 and 27 each coordinate Mg(2+). H41 serves as the catalytic Nucleophile. 2 cysteine pairs are disulfide-bonded: C45–C51 and C47–C189. D85 is a binding site for Mg(2+). N250 carries N-linked (GlcNAc...) asparagine glycosylation.

The protein belongs to the arthropod phospholipase D family. Class II subfamily. Requires Mg(2+) as cofactor. As to expression, expressed by the venom gland.

It is found in the secreted. The enzyme catalyses an N-(acyl)-sphingosylphosphocholine = an N-(acyl)-sphingosyl-1,3-cyclic phosphate + choline. The catalysed reaction is an N-(acyl)-sphingosylphosphoethanolamine = an N-(acyl)-sphingosyl-1,3-cyclic phosphate + ethanolamine. It catalyses the reaction a 1-acyl-sn-glycero-3-phosphocholine = a 1-acyl-sn-glycero-2,3-cyclic phosphate + choline. It carries out the reaction a 1-acyl-sn-glycero-3-phosphoethanolamine = a 1-acyl-sn-glycero-2,3-cyclic phosphate + ethanolamine. Its function is as follows. Dermonecrotic toxins cleave the phosphodiester linkage between the phosphate and headgroup of certain phospholipids (sphingolipid and lysolipid substrates), forming an alcohol (often choline) and a cyclic phosphate. This toxin acts on sphingomyelin (SM). It may also act on ceramide phosphoethanolamine (CPE), lysophosphatidylcholine (LPC) and lysophosphatidylethanolamine (LPE), but not on lysophosphatidylserine (LPS), and lysophosphatidylglycerol (LPG). It acts by transphosphatidylation, releasing exclusively cyclic phosphate products as second products. Induces dermonecrosis, hemolysis, increased vascular permeability, edema, inflammatory response, and platelet aggregation. The protein is Dermonecrotic toxin LafSicTox-betaIE1 of Loxosceles aff. spinulosa (strain GJB-2008) (Recluse spider).